Reading from the N-terminus, the 120-residue chain is Nitrogen regulatory protein GlnK1 (120 aa).

Residues threonine 40, 48–50 (GEQ), valine 75, and 98–101 (GDGR) contribute to the ADP site. ATP is bound by residues threonine 40, 48 to 50 (GEQ), valine 75, and 98 to 101 (GDGR).

This sequence belongs to the P(II) protein family. Homotrimer. Interacts and forms a complex with Amt1.

Its subcellular location is the cytoplasm. Its function is as follows. Involved in the regulation of nitrogen metabolism. Regulates the activity of its targets by protein-protein interaction in response to the nitrogen status of the cell. Regulates the activity of the ammonia channel Amt1 via direct interaction. In Archaeoglobus fulgidus (strain ATCC 49558 / DSM 4304 / JCM 9628 / NBRC 100126 / VC-16), this protein is Nitrogen regulatory protein GlnK1.